The following is a 506-amino-acid chain: Cysteine--tRNA ligase (506 aa).

Cys34 is a Zn(2+) binding site. The short motif at 36–46 (PTVYDFAHIGN) is the 'HIGH' region element. Zn(2+) is bound by residues Cys230, His269, and Glu273. The short motif at 302–306 (KMSKS) is the 'KMSKS' region element. ATP is bound at residue Lys305.

The protein belongs to the class-I aminoacyl-tRNA synthetase family. Monomer. The cofactor is Zn(2+).

Its subcellular location is the cytoplasm. The catalysed reaction is tRNA(Cys) + L-cysteine + ATP = L-cysteinyl-tRNA(Cys) + AMP + diphosphate. The chain is Cysteine--tRNA ligase from Brucella abortus (strain S19).